A 437-amino-acid chain; its full sequence is Chromosomal replication initiator protein DnaA (437 aa).

The tract at residues 1–67 is domain I, interacts with DnaA modulators; that stretch reads MKNKIIASLK…KVVKDILGKD (67 aa). The domain II stretch occupies residues 67 to 97; it reads DATYEITFKEIPYETKVESGPLIKKRPLLIT. Residues 98-313 form a domain III, AAA+ region region; the sequence is PLNPKYTFEN…GAILRLIAYR (216 aa). Positions 141, 143, 144, and 145 each coordinate ATP. The domain IV, binds dsDNA stretch occupies residues 314–437; the sequence is NLYGTLNLSI…SKGFAQGESM (124 aa).

This sequence belongs to the DnaA family. Oligomerizes as a right-handed, spiral filament on DNA at oriC.

The protein resides in the cytoplasm. In terms of biological role, plays an essential role in the initiation and regulation of chromosomal replication. ATP-DnaA binds to the origin of replication (oriC) to initiate formation of the DNA replication initiation complex once per cell cycle. Binds the DnaA box (a 9 base pair repeat at the origin) and separates the double-stranded (ds)DNA. Forms a right-handed helical filament on oriC DNA; dsDNA binds to the exterior of the filament while single-stranded (ss)DNA is stabiized in the filament's interior. The ATP-DnaA-oriC complex binds and stabilizes one strand of the AT-rich DNA unwinding element (DUE), permitting loading of DNA polymerase. After initiation quickly degrades to an ADP-DnaA complex that is not apt for DNA replication. Binds acidic phospholipids. The chain is Chromosomal replication initiator protein DnaA from Thermosipho melanesiensis (strain DSM 12029 / CIP 104789 / BI429).